A 448-amino-acid chain; its full sequence is Asparagine--tRNA ligase (448 aa).

This sequence belongs to the class-II aminoacyl-tRNA synthetase family. Homodimer.

The protein resides in the cytoplasm. It carries out the reaction tRNA(Asn) + L-asparagine + ATP = L-asparaginyl-tRNA(Asn) + AMP + diphosphate + H(+). The sequence is that of Asparagine--tRNA ligase from Streptococcus agalactiae serotype Ia (strain ATCC 27591 / A909 / CDC SS700).